Here is a 59-residue protein sequence, read N- to C-terminus: MKVKSAAKKRFKLTKSGQIKRKHAYTSHLAPHKTTKQKRHLRKQGTVSASDFKRIGNLI.

Disordered regions lie at residues Met-1–Lys-22 and Ala-30–Ala-49. The span at Ala-30–Lys-43 shows a compositional bias: basic residues.

The protein belongs to the bacterial ribosomal protein bL35 family.

The sequence is that of Large ribosomal subunit protein bL35 (rpmI) from Mycoplasma pneumoniae (strain ATCC 29342 / M129 / Subtype 1) (Mycoplasmoides pneumoniae).